A 101-amino-acid chain; its full sequence is uncharacterized protein (101 aa).

Residues 76–101 (KGNVTRRRKKTHLGNDDGKKEAQEKM) form a disordered region. The segment covering 88–101 (LGNDDGKKEAQEKM) has biased composition (basic and acidic residues).

This is an uncharacterized protein from Homo sapiens (Human).